The following is a 75-amino-acid chain: Penaeidin-3n (75 aa).

The N-terminal stretch at 1-19 (MRLVVCLVFLASFALVCQG) is a signal peptide. Glutamine 20 is subject to Pyrrolidone carboxylic acid. 2 cysteine pairs are disulfide-bonded: cysteine 44–cysteine 59 and cysteine 48–cysteine 66. Position 74 is a serine amide (serine 74).

This sequence belongs to the penaeidin family.

The protein resides in the cytoplasmic granule. Antibacterial and antifungal activity. Presents chitin-binding activity. The sequence is that of Penaeidin-3n from Penaeus setiferus (Atlantic white shrimp).